A 202-amino-acid polypeptide reads, in one-letter code: HTH-type transcriptional regulator BetI 1 (202 aa).

One can recognise an HTH tetR-type domain in the interval 8-68; sequence PIRRRQLIQA…SAMRQILWDL (61 aa). A DNA-binding region (H-T-H motif) is located at residues 31–50; that stretch reads TIARIAKRAGVSAGIISHYF.

It functions in the pathway amine and polyamine biosynthesis; betaine biosynthesis via choline pathway [regulation]. In terms of biological role, repressor involved in the biosynthesis of the osmoprotectant glycine betaine. It represses transcription of the choline transporter BetT and the genes of BetAB involved in the synthesis of glycine betaine. In Chromohalobacter salexigens (strain ATCC BAA-138 / DSM 3043 / CIP 106854 / NCIMB 13768 / 1H11), this protein is HTH-type transcriptional regulator BetI 1.